A 273-amino-acid polypeptide reads, in one-letter code: Putative pyruvate, phosphate dikinase regulatory protein (273 aa).

153-160 is an ADP binding site; the sequence is GISRTSKT.

This sequence belongs to the pyruvate, phosphate/water dikinase regulatory protein family. PDRP subfamily.

It catalyses the reaction N(tele)-phospho-L-histidyl/L-threonyl-[pyruvate, phosphate dikinase] + ADP = N(tele)-phospho-L-histidyl/O-phospho-L-threonyl-[pyruvate, phosphate dikinase] + AMP + H(+). It carries out the reaction N(tele)-phospho-L-histidyl/O-phospho-L-threonyl-[pyruvate, phosphate dikinase] + phosphate + H(+) = N(tele)-phospho-L-histidyl/L-threonyl-[pyruvate, phosphate dikinase] + diphosphate. Bifunctional serine/threonine kinase and phosphorylase involved in the regulation of the pyruvate, phosphate dikinase (PPDK) by catalyzing its phosphorylation/dephosphorylation. The protein is Putative pyruvate, phosphate dikinase regulatory protein of Rhizobium johnstonii (strain DSM 114642 / LMG 32736 / 3841) (Rhizobium leguminosarum bv. viciae).